Consider the following 78-residue polypeptide: Large ribosomal subunit protein bL28 (78 aa).

This sequence belongs to the bacterial ribosomal protein bL28 family.

This chain is Large ribosomal subunit protein bL28, found in Azoarcus sp. (strain BH72).